Reading from the N-terminus, the 274-residue chain is MRKSILSFLEKKGKNEKITMVSAYDYHSAKILDNCDIDIILVGDSLAMTVLGMQDTLSVTMDEMLIFTKAVSRGAKKSFVLADMPFMSYQSSDRDAILNASRFIKESHANGVKVEGGIEIASKIKLISQSGIPVVAHLGLTPQAVNMLGGYRVQGKDLQSAQKIIDDAKAVQDAGACMLVLECVPVKLAQKISSILEIPTIGIGSGKYCDGQVLVYHDLLGLNKDFKAKFVKHFDKIDPQVGVEKYRDEVKSGIFPSEEHSFDYLDDELLDKLY.

Mg(2+) is bound by residues Asp-44 and Asp-83. Residues 44 to 45 (DS), Asp-83, and Lys-113 contribute to the 3-methyl-2-oxobutanoate site. Glu-115 is a Mg(2+) binding site. Residue Glu-182 is the Proton acceptor of the active site.

The protein belongs to the PanB family. In terms of assembly, homodecamer; pentamer of dimers. Mg(2+) serves as cofactor.

The protein localises to the cytoplasm. It catalyses the reaction 3-methyl-2-oxobutanoate + (6R)-5,10-methylene-5,6,7,8-tetrahydrofolate + H2O = 2-dehydropantoate + (6S)-5,6,7,8-tetrahydrofolate. It participates in cofactor biosynthesis; (R)-pantothenate biosynthesis; (R)-pantoate from 3-methyl-2-oxobutanoate: step 1/2. Its function is as follows. Catalyzes the reversible reaction in which hydroxymethyl group from 5,10-methylenetetrahydrofolate is transferred onto alpha-ketoisovalerate to form ketopantoate. This Campylobacter jejuni (strain RM1221) protein is 3-methyl-2-oxobutanoate hydroxymethyltransferase.